An 81-amino-acid chain; its full sequence is Photosystem I iron-sulfur center (81 aa).

2 consecutive 4Fe-4S ferredoxin-type domains span residues 2 to 31 (AHSV…MISW) and 39 to 68 (IASA…VRVY). 8 residues coordinate [4Fe-4S] cluster: cysteine 11, cysteine 14, cysteine 17, cysteine 21, cysteine 48, cysteine 51, cysteine 54, and cysteine 58.

As to quaternary structure, the eukaryotic PSI reaction center is composed of at least 11 subunits. It depends on [4Fe-4S] cluster as a cofactor.

The protein localises to the plastid. It is found in the chloroplast thylakoid membrane. It catalyses the reaction reduced [plastocyanin] + hnu + oxidized [2Fe-2S]-[ferredoxin] = oxidized [plastocyanin] + reduced [2Fe-2S]-[ferredoxin]. Its function is as follows. Apoprotein for the two 4Fe-4S centers FA and FB of photosystem I (PSI); essential for photochemical activity. FB is the terminal electron acceptor of PSI, donating electrons to ferredoxin. The C-terminus interacts with PsaA/B/D and helps assemble the protein into the PSI complex. Required for binding of PsaD and PsaE to PSI. PSI is a plastocyanin-ferredoxin oxidoreductase, converting photonic excitation into a charge separation, which transfers an electron from the donor P700 chlorophyll pair to the spectroscopically characterized acceptors A0, A1, FX, FA and FB in turn. The sequence is that of Photosystem I iron-sulfur center (psaC) from Anthoceros angustus (Hornwort).